The following is a 260-amino-acid chain: Ubiquinone/menaquinone biosynthesis C-methyltransferase UbiE (260 aa).

S-adenosyl-L-methionine contacts are provided by residues Thr83, Asp104, and 132 to 133 (NA).

Belongs to the class I-like SAM-binding methyltransferase superfamily. MenG/UbiE family.

It carries out the reaction a 2-demethylmenaquinol + S-adenosyl-L-methionine = a menaquinol + S-adenosyl-L-homocysteine + H(+). The catalysed reaction is a 2-methoxy-6-(all-trans-polyprenyl)benzene-1,4-diol + S-adenosyl-L-methionine = a 5-methoxy-2-methyl-3-(all-trans-polyprenyl)benzene-1,4-diol + S-adenosyl-L-homocysteine + H(+). Its pathway is quinol/quinone metabolism; menaquinone biosynthesis; menaquinol from 1,4-dihydroxy-2-naphthoate: step 2/2. The protein operates within cofactor biosynthesis; ubiquinone biosynthesis. In terms of biological role, methyltransferase required for the conversion of demethylmenaquinol (DMKH2) to menaquinol (MKH2) and the conversion of 2-polyprenyl-6-methoxy-1,4-benzoquinol (DDMQH2) to 2-polyprenyl-3-methyl-6-methoxy-1,4-benzoquinol (DMQH2). The polypeptide is Ubiquinone/menaquinone biosynthesis C-methyltransferase UbiE (Bartonella quintana (strain Toulouse) (Rochalimaea quintana)).